Here is a 968-residue protein sequence, read N- to C-terminus: RNA polymerase-associated protein RapA (968 aa).

The Helicase ATP-binding domain maps to 164-334 (DVGRRHAPRV…FARLRLLDPN (171 aa)). 177-184 (DEVGLGKT) lines the ATP pocket. Positions 280–283 (DEAH) match the DEAH box motif. Residues 490–644 (RVEWLMGYLT…TCPTGRAIYD (155 aa)) form the Helicase C-terminal domain.

Belongs to the SNF2/RAD54 helicase family. RapA subfamily. As to quaternary structure, interacts with the RNAP. Has a higher affinity for the core RNAP than for the holoenzyme. Its ATPase activity is stimulated by binding to RNAP.

Transcription regulator that activates transcription by stimulating RNA polymerase (RNAP) recycling in case of stress conditions such as supercoiled DNA or high salt concentrations. Probably acts by releasing the RNAP, when it is trapped or immobilized on tightly supercoiled DNA. Does not activate transcription on linear DNA. Probably not involved in DNA repair. The polypeptide is RNA polymerase-associated protein RapA (Salmonella arizonae (strain ATCC BAA-731 / CDC346-86 / RSK2980)).